Here is a 2582-residue protein sequence, read N- to C-terminus: Chromodomain-helicase-DNA-binding protein 8 (2582 aa).

4 disordered regions span residues 22 to 111, 136 to 155, 253 to 283, and 349 to 377; these read DDSF…PVLQ, MGVS…PSQS, VKGS…TQGE, and QKIQ…PLTL. Polar residues-rich tracts occupy residues 42–51, 94–111, and 141–155; these read SLDSLDQMNQ, DYTT…PVLQ, and TGVS…PSQS. Positions 255–267 are enriched in low complexity; sequence GSAPAGNPGAAGP. The segment covering 355–372 has biased composition (pro residues); it reads PQPPSSQPQPQPQPPPSA. Ser-434 carries the post-translational modification Phosphoserine. 2 disordered regions span residues 475-585 and 598-617; these read RARG…VKRK and DEEE…PILP. Positions 495-518 are enriched in basic and acidic residues; it reads RPEEEGEKKRRKKSSGERLKEEKP. Phosphoserine occurs at positions 555 and 564. Residues 574 to 585 are compositionally biased toward basic residues; it reads QKRRSNRQVKRK. Lys-611 participates in a covalent cross-link: Glycyl lysine isopeptide (Lys-Gly) (interchain with G-Cter in SUMO). 2 consecutive Chromo domains span residues 644-711 and 726-792; these read AIVD…AQMR and VEVD…RVNR. A Helicase ATP-binding domain is found at 825 to 999; the sequence is LFNWYNRQNC…FSLLHFLEPS (175 aa). ATP is bound at residue 838 to 845; sequence DEMGLGKT. The DEAH box motif lies at 950–953; sequence DEAH. Residues 1139 to 1290 enclose the Helicase C-terminal domain; that stretch reads LIDKLLPKLK…KAVLQSMSGR (152 aa). Phosphoserine is present on residues Ser-1422 and Ser-1426. A disordered region spans residues 1694–1715; it reads EDPEYKPLQGPPKDPDDEGDPL. The interaction with FAM124B stretch occupies residues 1791-2304; it reads IARREKQQRW…LVELEVECME (514 aa). Residues Ser-1978 and Ser-1980 each carry the phosphoserine modification. Residues 1990-2019 are disordered; it reads QCTSRTASPSPLRPDAPVEKSPEESTVQVP. Position 1995 is a phosphothreonine (Thr-1995). 3 positions are modified to phosphoserine: Ser-1997, Ser-1999, and Ser-2010. Lys-2027 participates in a covalent cross-link: Glycyl lysine isopeptide (Lys-Gly) (interchain with G-Cter in SUMO2). Phosphoserine is present on residues Ser-2040, Ser-2070, and Ser-2072. Residues 2045-2120 are disordered; that stretch reads VRVGSSDTAP…RSRPKLYDEE (76 aa). Over residues 2065–2074 the composition is skewed to acidic residues; it reads EDEDDSDSEL. The span at 2077 to 2096 shows a compositional bias: low complexity; the sequence is SKLSPSSSSSSSSSSSSSST. Residues 2104-2118 are compositionally biased toward basic and acidic residues; the sequence is EEKLTADRSRPKLYD. Residues Ser-2184, Ser-2202, and Ser-2204 each carry the phosphoserine modification. A disordered region spans residues 2187-2233; sequence VTAGGILGPGNHLLDSPSLTPGEDGDSPVPTPRSGSAASMAEEEASA. At Thr-2206 the chain carries Phosphothreonine. Phosphoserine is present on Ser-2213. A Phosphothreonine modification is found at Thr-2217. Positions 2222–2233 are enriched in low complexity; it reads SAASMAEEEASA. Phosphoserine is present on Ser-2225. A Glycyl lysine isopeptide (Lys-Gly) (interchain with G-Cter in SUMO2) cross-link involves residue Lys-2258. Residues 2486–2582 are disordered; the sequence is HVDSSTMLHH…NSDSSEDADD (97 aa). Residues 2493-2511 show a composition bias toward basic residues; that stretch reads LHHHHHHPHPHHHHHHHPG. Over residues 2514–2529 the composition is skewed to low complexity; the sequence is TTGYPSSPATTTSGTA. At Ser-2520 the chain carries Phosphoserine. Over residues 2537-2551 the composition is skewed to acidic residues; it reads PEDDDEEEDEEDDDL.

Belongs to the SNF2/RAD54 helicase family. CHD8 subfamily. Interacts with CTNNB1 and PIAS3. Component of some MLL1/MLL complex, at least composed of the core components KMT2A/MLL1, ASH2L, HCFC1/HCF1, WDR5 and RBBP5, as well as the facultative components BACC1, CHD8, E2F6, HSP70, INO80C, KANSL1, LAS1L, MAX, MCRS1, MGA, KAT8/MOF, PELP1, PHF20, PRP31, RING2, RUVB1/TIP49A, RUVB2/TIP49B, SENP3, TAF1, TAF4, TAF6, TAF7, TAF9 and TEX10. Interacts with CHD7. Interacts with FAM124B. Interacts with p53/TP53 and histone H1. Interacts with CTCF. Interacts with TLK2. Interacts with HNRNPL in an RNA-dependent manner. In terms of processing, sumoylated.

It localises to the nucleus. The enzyme catalyses ATP + H2O = ADP + phosphate + H(+). Its function is as follows. ATP-dependent chromatin-remodeling factor, it slides nucleosomes along DNA; nucleosome sliding requires ATP. Acts as a transcription repressor by remodeling chromatin structure and recruiting histone H1 to target genes. Suppresses p53/TP53-mediated apoptosis by recruiting histone H1 and preventing p53/TP53 transactivation activity. Acts as a negative regulator of Wnt signaling pathway by regulating beta-catenin (CTNNB1) activity. Negatively regulates CTNNB1-targeted gene expression by being recruited specifically to the promoter regions of several CTNNB1 responsive genes. Involved in both enhancer blocking and epigenetic remodeling at chromatin boundary via its interaction with CTCF. Acts as a suppressor of STAT3 activity by suppressing the LIF-induced STAT3 transcriptional activity. Also acts as a transcription activator via its interaction with ZNF143 by participating in efficient U6 RNA polymerase III transcription. Regulates alternative splicing of a core group of genes involved in neuronal differentiation, cell cycle and DNA repair. Enables H3K36me3-coupled transcription elongation and co-transcriptional RNA processing likely via interaction with HNRNPL. In Mus musculus (Mouse), this protein is Chromodomain-helicase-DNA-binding protein 8.